A 2525-amino-acid chain; its full sequence is Highly reducing polyketide synthase cm3B (2525 aa).

Positions 1 to 10 (MQSDTNNSPL) are enriched in polar residues. A disordered region spans residues 1–29 (MQSDTNNSPLSWEELRSGAASSDANSSPP). One can recognise a Ketosynthase family 3 (KS3) domain in the interval 29-450 (PEPIAIIGMS…GTNAHVVVDA (422 aa)). Residues Cys-202, His-336, and His-376 each act as for beta-ketoacyl synthase activity in the active site. A malonyl-CoA:ACP transacylase (MAT) domain region spans residues 560-895 (VFSGQGSQYA…FLECLGALHV (336 aa)). Residues 949-1087 (HELLGTFAHD…GLVHAETQAA (139 aa)) are N-terminal hotdog fold. The interval 949–1252 (HELLGTFAHD…AKGVHTTTLP (304 aa)) is dehydratase (DH) domain. A PKS/mFAS DH domain is found at 949–1257 (HELLGTFAHD…TTTLPGDTGL (309 aa)). Residue His-981 is the Proton acceptor; for dehydratase activity of the active site. Residues 1107–1257 (VHEVTPQKLY…TTTLPGDTGL (151 aa)) are C-terminal hotdog fold. The active-site Proton donor; for dehydratase activity is the Asp-1169. A methyltransferase (CMet) domain region spans residues 1399–1504 (LEVGAGTASA…KKLLKPGGKF (106 aa)). Positions 1799-2111 (GLLESIRWKD…AGKHTGKIVL (313 aa)) are enoyl reductase (ER) domain. Residues 2411–2489 (AQLLENISQL…ELAKIIAKES (79 aa)) form the Carrier domain. Residues 2411–2489 (AQLLENISQL…ELAKIIAKES (79 aa)) form a ketoreductase (KR) domain region. Ser-2449 carries the post-translational modification O-(pantetheine 4'-phosphoryl)serine.

It participates in secondary metabolite biosynthesis. Highly reducing polyketide synthase; part of the gene cluster that mediates the biosynthesis of beauveriolides I and III, cyclodepsipeptides acting as inhibitors of the acyl-CoA:cholesterol acyltransferase. The HR-PKS cm3B initiates the biosynthesis of beauveriolides by iteratively catalyzing the formation of the linear polyketide chain. The ATP-dependent acetyl-CoA ligase cm3D converts the polyketide carboxylic acid to a CoA thioester which id shuttled to the first T domain in the NRPS cm3A by the acetyltransferase cm3C. Cm3A contains 13 domains and assembles the polyketide chain, L-phenylalanine, L-alanine, and D-leucine (or D-allo-isoleucine) to form beauveriolide I (or beauveriolide III). The production of both beauveriolides I and III suggests the substrate adaptability of cm3B, using different amino acids as substrates. This Cordyceps militaris (strain CM01) (Caterpillar fungus) protein is Highly reducing polyketide synthase cm3B.